The primary structure comprises 152 residues: Mediator of RNA polymerase II transcription subunit 31 (152 aa).

Residues 126–144 (DLHVESEEDREKNNEEQAE) are compositionally biased toward basic and acidic residues. The interval 126 to 152 (DLHVESEEDREKNNEEQAEKGSNGATS) is disordered.

This sequence belongs to the Mediator complex subunit 31 family. In terms of assembly, component of the Mediator complex.

The protein localises to the nucleus. Component of the Mediator complex, a coactivator involved in the regulated transcription of nearly all RNA polymerase II-dependent genes. Mediator functions as a bridge to convey information from gene-specific regulatory proteins to the basal RNA polymerase II transcription machinery. Mediator is recruited to promoters by direct interactions with regulatory proteins and serves as a scaffold for the assembly of a functional preinitiation complex with RNA polymerase II and the general transcription factors. In Coccidioides immitis (strain RS) (Valley fever fungus), this protein is Mediator of RNA polymerase II transcription subunit 31 (SOH1).